The sequence spans 248 residues: uncharacterized protein (248 aa).

Positions 7–246 (VQLSNLSWTF…PASTILLPTS (240 aa)) constitute an ABC transporter domain. 43-50 (GQSGSGKS) provides a ligand contact to ATP.

This sequence belongs to the ABC transporter superfamily.

This is an uncharacterized protein from Mycobacterium tuberculosis (strain CDC 1551 / Oshkosh).